The primary structure comprises 87 residues: Protein anon-73B1 (87 aa).

The chain crosses the membrane as a helical span at residues 25 to 47 (LLIRYGLYVGALFQFVCISAAVL). A disordered region spans residues 52–87 (PDVNSNPETGEVTEREGEPVRTRLHKIRKLEKKKRR). Over residues 63–72 (VTEREGEPVR) the composition is skewed to basic and acidic residues. Basic residues predominate over residues 73–87 (TRLHKIRKLEKKKRR).

It belongs to the UPF0239 family.

Its subcellular location is the membrane. The protein is Protein anon-73B1 of Drosophila erecta (Fruit fly).